Here is an 886-residue protein sequence, read N- to C-terminus: UPF0592 membrane protein C7D4.03c (886 aa).

A disordered region spans residues 87-112 (ILNEPYNESPSSSSSDSSSRSTSPFS). Over residues 95-112 (SPSSSSSDSSSRSTSPFS) the composition is skewed to low complexity. 3 consecutive transmembrane segments (helical) span residues 277–297 (FCASILVLSFFQLPLFADHFL), 374–394 (GGFFFEFLSCYHSFLALQFSF), and 400–420 (VIYFAPGYICLHAYLLELTIS).

Belongs to the UPF0592 family.

It localises to the membrane. The chain is UPF0592 membrane protein C7D4.03c from Schizosaccharomyces pombe (strain 972 / ATCC 24843) (Fission yeast).